The primary structure comprises 194 residues: Large ribosomal subunit protein bL9 (194 aa).

The interval 169 to 194 (DDINDNARPENFFDPNAEFDGGEDNA) is disordered.

The protein belongs to the bacterial ribosomal protein bL9 family.

Binds to the 23S rRNA. The chain is Large ribosomal subunit protein bL9 from Mesorhizobium japonicum (strain LMG 29417 / CECT 9101 / MAFF 303099) (Mesorhizobium loti (strain MAFF 303099)).